The sequence spans 436 residues: 3-ketoacyl-CoA thiolase (436 aa).

The Acyl-thioester intermediate role is filled by C99. Catalysis depends on proton acceptor residues H392 and C422.

Belongs to the thiolase-like superfamily. Thiolase family. Heterotetramer of two alpha chains (FadJ) and two beta chains (FadI).

It is found in the cytoplasm. The enzyme catalyses an acyl-CoA + acetyl-CoA = a 3-oxoacyl-CoA + CoA. The protein operates within lipid metabolism; fatty acid beta-oxidation. Its function is as follows. Catalyzes the final step of fatty acid oxidation in which acetyl-CoA is released and the CoA ester of a fatty acid two carbons shorter is formed. The polypeptide is 3-ketoacyl-CoA thiolase (Escherichia coli O9:H4 (strain HS)).